A 67-amino-acid polypeptide reads, in one-letter code: Conotoxin Cl6.6a (67 aa).

Residues 1-24 form the signal peptide; that stretch reads MKLTCVLIAAVLLLAVCQLDSADA. The propeptide occupies 25 to 37; sequence TGYMRKNPSLRSP. 3 disulfides stabilise this stretch: C43/C57, C50/C61, and C56/C65.

Belongs to the conotoxin O1 superfamily. In terms of tissue distribution, expressed by the venom duct.

Its subcellular location is the secreted. This chain is Conotoxin Cl6.6a, found in Californiconus californicus (California cone).